The chain runs to 533 residues: Thromboxane-A synthase (533 aa).

Over 1–10 the chain is Cytoplasmic; it reads MEVLGLLKFE. Residues 11-31 form a helical membrane-spanning segment; it reads VSGTVVTVTLSVVLLALLKWY. The Lumenal portion of the chain corresponds to 32–75; sequence STSAFSRLRKLGIRHPEPSPFVGNLMFFRQGFWESHLELRERYG. A helical transmembrane segment spans residues 76–96; the sequence is PLCGYYLGRRMYIVISDPDMI. At 97 to 223 the chain is on the cytoplasmic side; the sequence is KEVLVENFSN…QRVFAFSTPR (127 aa). Residues 224–244 traverse the membrane as a helical segment; it reads PLLALILSFPSIMVPLARILP. Over 245–335 the chain is Lumenal; the sequence is NKNRDELNGF…LTVDEIAGQA (91 aa). The chain crosses the membrane as a helical span at residues 336–356; that stretch reads FLFLIAGHEITTNTLSFITYL. The Cytoplasmic segment spans residues 357–533; the sequence is LATHPECQER…NGVYVKIVSR (177 aa). Cys-479 serves as a coordination point for heme.

This sequence belongs to the cytochrome P450 family. In terms of assembly, monomer. The cofactor is heme. As to expression, expressed in bone marrow, spleen, lung, thymus, liver, uterus, and macrophages.

The protein resides in the endoplasmic reticulum membrane. It catalyses the reaction prostaglandin H2 = thromboxane A2. The catalysed reaction is prostaglandin H2 = (12S)-hydroxy-(5Z,8E,10E)-heptadecatrienoate + malonaldehyde. It carries out the reaction a hydroperoxyeicosatetraenoate = an oxoeicosatetraenoate + H2O. The enzyme catalyses (15S)-hydroperoxy-(5Z,8Z,11Z,13E)-eicosatetraenoate = 15-oxo-(5Z,8Z,11Z,13E)-eicosatetraenoate + H2O. It catalyses the reaction (15S)-hydroperoxy-(5Z,8Z,11Z,13E)-eicosatetraenoate + AH2 = (15S)-hydroxy-(5Z,8Z,11Z,13E)-eicosatetraenoate + A + H2O. Its function is as follows. Catalyzes the conversion of prostaglandin H2 (PGH2) to thromboxane A2 (TXA2), a potent inducer of blood vessel constriction and platelet aggregation. Also cleaves PGH2 to 12-hydroxy-heptadecatrienoicacid (12-HHT) and malondialdehyde, which is known to act as a mediator of DNA damage. 12-HHT and malondialdehyde are formed stoichiometrically in the same amounts as TXA2. Additionally, displays dehydratase activity, toward (15S)-hydroperoxy-(5Z,8Z,11Z,13E)-eicosatetraenoate (15(S)-HPETE) producing 15-KETE and 15-HETE. This Rattus norvegicus (Rat) protein is Thromboxane-A synthase (Tbxas1).